The sequence spans 1214 residues: Ubiquitin carboxyl-terminal hydrolase 36 (1214 aa).

Positions 124-169 (AVGSNGHDNNTVNGGTVNGNRKQTVDSGQSNQNSSANPNELPKPKR) are disordered. Residues 132 to 143 (NNTVNGGTVNGN) are compositionally biased toward low complexity. A compositionally biased stretch (polar residues) spans 144 to 161 (RKQTVDSGQSNQNSSANP). The USP domain occupies 192–502 (AGMLNVGNTC…NAYIMFYELD (311 aa)). Cysteine 201 serves as the catalytic Nucleophile. Histidine 461 functions as the Proton acceptor in the catalytic mechanism. Low complexity predominate over residues 509–523 (SSTINNNSSSSSNNS). The disordered stretch occupies residues 509 to 532 (SSTINNNSSSSSNNSVAPKLNGLR). 2 positions are modified to phosphoserine: serine 553 and serine 555. Disordered stretches follow at residues 631–819 (GEAA…KQKT), 836–964 (HRIA…ASKS), 977–1001 (QKLL…SESV), 1048–1161 (HGDT…PNFQ), and 1176–1214 (KFQQ…QQQS). Over residues 633 to 651 (AAPNANTNANANKSSCNNN) the composition is skewed to low complexity. Positions 666-685 (SDEDEDEDDSDDDDDDDDDD) are enriched in acidic residues. Threonine 717 bears the Phosphothreonine mark. 2 positions are modified to phosphoserine: serine 727 and serine 729. 2 stretches are compositionally biased toward low complexity: residues 735–751 (QQQQ…PQQL) and 785–816 (KTNG…NSSK). Residues 856-868 (EQVQTEQGTKKLN) show a composition bias toward polar residues. The segment covering 869 to 878 (SASSASASKS) has biased composition (low complexity). Serine 891 carries the phosphoserine modification. Threonine 894 is modified (phosphothreonine). Position 897 is a phosphoserine (serine 897). The span at 915–942 (DDDDEEDEEEDDVEADADQEDDDDEVVV) shows a compositional bias: acidic residues. Phosphothreonine is present on threonine 951. Over residues 983–1001 (SAKSAATTRPGNGYQSESV) the composition is skewed to polar residues. Residues 1058–1076 (NSSSNNSSNINSNSNSNSN) show a composition bias toward low complexity. A compositionally biased stretch (basic and acidic residues) spans 1089-1098 (EAREQRKRDA). Low complexity-rich tracts occupy residues 1178 to 1188 (QQQRALQRHLA) and 1197 to 1214 (QQQS…QQQS).

It belongs to the peptidase C19 family. As to quaternary structure, interacts with atms/PAF1, but not with CycT.

The protein localises to the nucleus. Its subcellular location is the nucleolus. It carries out the reaction Thiol-dependent hydrolysis of ester, thioester, amide, peptide and isopeptide bonds formed by the C-terminal Gly of ubiquitin (a 76-residue protein attached to proteins as an intracellular targeting signal).. Functionally, required for maintaining multiple types of adult stem cells, including male and female germline, epithelial follicle cell and intestinal stem cells. May function as a transcriptional repressor by continually deubiquiting histone H2B at the promoters of genes critical for cellular differentiation, thereby preventing histone H3 'Lys-4' trimethylation (H3K4). Controls selective autophagy activation by ubiquitinated proteins. This chain is Ubiquitin carboxyl-terminal hydrolase 36 (Usp36), found in Drosophila virilis (Fruit fly).